The chain runs to 77 residues: MIGDLLIFGTLLMNAGAVLNFKLKKRETQSQGFGDDSGSSSTGENIREFLLSLRYFRIFIALWNIFMMFCMIVLFGS.

Residues 1-17 (MIGDLLIFGTLLMNAGA) form the signal peptide. The Extracellular segment spans residues 18-55 (VLNFKLKKRETQSQGFGDDSGSSSTGENIREFLLSLRY). A helical transmembrane segment spans residues 56 to 76 (FRIFIALWNIFMMFCMIVLFG). A topological domain (cytoplasmic) is located at residue S77.

It belongs to the SMIM7 family.

It is found in the membrane. The sequence is that of Small integral membrane protein 7 (smim7) from Danio rerio (Zebrafish).